The chain runs to 315 residues: Methionyl-tRNA formyltransferase (315 aa).

Residue 113-116 (SLLP) coordinates (6S)-5,6,7,8-tetrahydrofolate.

The protein belongs to the Fmt family.

The enzyme catalyses L-methionyl-tRNA(fMet) + (6R)-10-formyltetrahydrofolate = N-formyl-L-methionyl-tRNA(fMet) + (6S)-5,6,7,8-tetrahydrofolate + H(+). Attaches a formyl group to the free amino group of methionyl-tRNA(fMet). The formyl group appears to play a dual role in the initiator identity of N-formylmethionyl-tRNA by promoting its recognition by IF2 and preventing the misappropriation of this tRNA by the elongation apparatus. In Salmonella dublin (strain CT_02021853), this protein is Methionyl-tRNA formyltransferase.